The chain runs to 78 residues: Large ribosomal subunit protein eL20 (78 aa).

This sequence belongs to the eukaryotic ribosomal protein eL20 family. As to quaternary structure, part of the 50S ribosomal subunit. Binds 23S rRNA.

The polypeptide is Large ribosomal subunit protein eL20 (Pyrobaculum calidifontis (strain DSM 21063 / JCM 11548 / VA1)).